Here is a 187-residue protein sequence, read N- to C-terminus: UPF0301 protein WIGBR1650 (187 aa).

This sequence belongs to the UPF0301 (AlgH) family.

This Wigglesworthia glossinidia brevipalpis protein is UPF0301 protein WIGBR1650.